The chain runs to 353 residues: MRKIIHVDMDCFFAAVEMRDDPSLRDIPLAIGGSADRRGVISTANYPARRYGVHSAMSTAMALKLCPHLKLLPGRMAAYKEASQHIREIFARYTPLIEPLSLDEAYLDVTDCSQCNGSATLIAEQIRQTISDELNLTASAGIAPIKFLAKIASELNKPNGQYVITPAQVPAFLQQLPLSKIPGVGKVTAKRLEEVGLITCADVQQYDLAALLKRFGKFGRVLWERCQGIDLREVSPERLRKSVGVERTLAEDIHDWEDCEALIVDKLYPELELRLRKVKPDLHIARQGVKLKFQDFQQTTQEHVWPVLNKDDLINVARQVWRERREGRGVRLVGLHVTLLDPQLERQLLLPWE.

Residues 4–185 enclose the UmuC domain; the sequence is IIHVDMDCFF…LPLSKIPGVG (182 aa). Mg(2+) is bound by residues Asp8 and Asp103. Glu104 is a catalytic residue.

The protein belongs to the DNA polymerase type-Y family. As to quaternary structure, monomer. Mg(2+) is required as a cofactor.

The protein resides in the cytoplasm. It catalyses the reaction DNA(n) + a 2'-deoxyribonucleoside 5'-triphosphate = DNA(n+1) + diphosphate. Poorly processive, error-prone DNA polymerase involved in untargeted mutagenesis. Copies undamaged DNA at stalled replication forks, which arise in vivo from mismatched or misaligned primer ends. These misaligned primers can be extended by PolIV. Exhibits no 3'-5' exonuclease (proofreading) activity. May be involved in translesional synthesis, in conjunction with the beta clamp from PolIII. The sequence is that of DNA polymerase IV from Serratia proteamaculans (strain 568).